Consider the following 34-residue polypeptide: Photosystem II reaction center protein Y (34 aa).

At 1–4 (MDIR) the chain is on the lumenal side. The chain crosses the membrane as a helical span at residues 5–23 (LLIVLLPVLAAASWALYNI). Residues 24 to 34 (GRVALQQFRSM) lie on the Stromal side of the membrane.

Belongs to the PsbY family. As to quaternary structure, PSII is composed of 1 copy each of membrane proteins PsbA, PsbB, PsbC, PsbD, PsbE, PsbF, PsbH, PsbI, PsbJ, PsbK, PsbL, PsbM, PsbT, PsbX, PsbY, PsbZ, Psb30/Ycf12, at least 3 peripheral proteins of the oxygen-evolving complex and a large number of cofactors. It forms dimeric complexes.

It localises to the plastid. The protein localises to the chloroplast thylakoid membrane. In terms of biological role, loosely associated component of the core of photosystem II (PSII), it is not always seen in crystals. PSII is a light-driven water plastoquinone oxidoreductase, using light energy to abstract electrons from H(2)O, generating a proton gradient subsequently used for ATP formation. In Gracilaria tenuistipitata var. liui (Red alga), this protein is Photosystem II reaction center protein Y.